A 202-amino-acid polypeptide reads, in one-letter code: Peptide methionine sulfoxide reductase A3 (202 aa).

The tract at residues 1–34 is disordered; the sequence is MNILNRLGLGSSGQTNMDPSPIAQGNDDDTPAPG. Ser189 bears the Phosphoserine mark.

This sequence belongs to the MsrA Met sulfoxide reductase family. In terms of tissue distribution, expressed in rosette and cauline leaves, and at lower levels in roots, stems and flowers (at protein level).

It is found in the cytoplasm. The protein resides in the cytosol. It catalyses the reaction L-methionyl-[protein] + [thioredoxin]-disulfide + H2O = L-methionyl-(S)-S-oxide-[protein] + [thioredoxin]-dithiol. It carries out the reaction [thioredoxin]-disulfide + L-methionine + H2O = L-methionine (S)-S-oxide + [thioredoxin]-dithiol. Functionally, catalyzes the reduction of methionine sulfoxide (MetSO) to methionine in proteins. Plays a protective role against oxidative stress by restoring activity to proteins that have been inactivated by methionine oxidation. May prevent cellular oxidative damage due to light exposure. MSRA family specifically reduces the MetSO S-enantiomer. The sequence is that of Peptide methionine sulfoxide reductase A3 (MSRA3) from Arabidopsis thaliana (Mouse-ear cress).